The primary structure comprises 260 residues: Pyridoxine 5'-phosphate synthase (260 aa).

Residues Asn-10 and Arg-21 each coordinate 3-amino-2-oxopropyl phosphate. His-46 acts as the Proton acceptor in catalysis. The 1-deoxy-D-xylulose 5-phosphate site is built by Arg-48 and His-53. The active-site Proton acceptor is Glu-76. Thr-113 contacts 1-deoxy-D-xylulose 5-phosphate. The active-site Proton donor is His-204. Residues Asp-205 and Gly-227–His-228 each bind 3-amino-2-oxopropyl phosphate.

This sequence belongs to the PNP synthase family. As to quaternary structure, homooctamer; tetramer of dimers.

It is found in the cytoplasm. It catalyses the reaction 3-amino-2-oxopropyl phosphate + 1-deoxy-D-xylulose 5-phosphate = pyridoxine 5'-phosphate + phosphate + 2 H2O + H(+). The protein operates within cofactor biosynthesis; pyridoxine 5'-phosphate biosynthesis; pyridoxine 5'-phosphate from D-erythrose 4-phosphate: step 5/5. In terms of biological role, catalyzes the complicated ring closure reaction between the two acyclic compounds 1-deoxy-D-xylulose-5-phosphate (DXP) and 3-amino-2-oxopropyl phosphate (1-amino-acetone-3-phosphate or AAP) to form pyridoxine 5'-phosphate (PNP) and inorganic phosphate. The chain is Pyridoxine 5'-phosphate synthase from Xylella fastidiosa (strain M23).